Here is a 397-residue protein sequence, read N- to C-terminus: Digeranylgeranylglycerophospholipid reductase (397 aa).

Positions 15, 34, 45, 46, 48, 101, 125, 163, 284, 296, and 297 each coordinate FAD. A 2,3-bis-O-(geranylgeranyl)-sn-glycerol 1-phospholipid is bound by residues Lys339 and Val375.

It belongs to the geranylgeranyl reductase family. DGGGPL reductase subfamily. Requires FAD as cofactor.

The enzyme catalyses 2,3-bis-O-(phytanyl)-sn-glycerol 1-phosphate + 8 NADP(+) = 2,3-bis-O-(geranylgeranyl)-sn-glycerol 1-phosphate + 8 NADPH + 8 H(+). It carries out the reaction 2,3-bis-O-(phytanyl)-sn-glycerol 1-phosphate + 8 NAD(+) = 2,3-bis-O-(geranylgeranyl)-sn-glycerol 1-phosphate + 8 NADH + 8 H(+). The catalysed reaction is a 2,3-bis-O-phytanyl-sn-glycerol 1-phospholipid + 8 A = a 2,3-bis-O-(geranylgeranyl)-sn-glycerol 1-phospholipid + 8 AH2. It catalyses the reaction CDP-2,3-bis-O-(geranylgeranyl)-sn-glycerol + 8 AH2 = CDP-2,3-bis-O-(phytanyl)-sn-glycerol + 8 A. The enzyme catalyses archaetidylserine + 8 AH2 = 2,3-bis-O-phytanyl-sn-glycero-3-phospho-L-serine + 8 A. It functions in the pathway membrane lipid metabolism; glycerophospholipid metabolism. Its function is as follows. Is involved in the reduction of 2,3-digeranylgeranylglycerophospholipids (unsaturated archaeols) into 2,3-diphytanylglycerophospholipids (saturated archaeols) in the biosynthesis of archaeal membrane lipids. Catalyzes the formation of archaetidic acid (2,3-di-O-phytanyl-sn-glyceryl phosphate) from 2,3-di-O-geranylgeranylglyceryl phosphate (DGGGP) via the hydrogenation of each double bond of the isoprenoid chains. Is also probably able to reduce double bonds of geranyl groups in CDP-2,3-bis-O-(geranylgeranyl)-sn-glycerol and archaetidylserine, thus acting at various stages in the biosynthesis of archaeal membrane lipids. The protein is Digeranylgeranylglycerophospholipid reductase of Picrophilus torridus (strain ATCC 700027 / DSM 9790 / JCM 10055 / NBRC 100828 / KAW 2/3).